A 229-amino-acid chain; its full sequence is Potassium/proton antiporter CemA (229 aa).

The next 3 helical transmembrane spans lie at 6-26 (AFIP…ISLC), 107-127 (ILHF…SFWG), and 189-209 (ILSG…KYWI).

This sequence belongs to the CemA family.

It is found in the plastid. Its subcellular location is the chloroplast inner membrane. It catalyses the reaction K(+)(in) + H(+)(out) = K(+)(out) + H(+)(in). Contributes to K(+)/H(+) antiport activity by supporting proton efflux to control proton extrusion and homeostasis in chloroplasts in a light-dependent manner to modulate photosynthesis. Prevents excessive induction of non-photochemical quenching (NPQ) under continuous-light conditions. Indirectly promotes efficient inorganic carbon uptake into chloroplasts. This chain is Potassium/proton antiporter CemA, found in Arabidopsis thaliana (Mouse-ear cress).